We begin with the raw amino-acid sequence, 150 residues long: Putative transmembrane protein DDB_G0277665 (150 aa).

2 helical membrane passes run 4-24 (TLII…FNIL) and 42-62 (VIVG…FLPL).

It is found in the membrane. The polypeptide is Putative transmembrane protein DDB_G0277665 (Dictyostelium discoideum (Social amoeba)).